A 300-amino-acid polypeptide reads, in one-letter code: NAD kinase (300 aa).

Catalysis depends on Asp77, which acts as the Proton acceptor. NAD(+) is bound by residues 77-78 (DG), 151-152 (ND), His162, Arg179, Asp181, and 192-197 (TAYSLS).

The protein belongs to the NAD kinase family. Requires a divalent metal cation as cofactor.

It localises to the cytoplasm. It carries out the reaction NAD(+) + ATP = ADP + NADP(+) + H(+). Functionally, involved in the regulation of the intracellular balance of NAD and NADP, and is a key enzyme in the biosynthesis of NADP. Catalyzes specifically the phosphorylation on 2'-hydroxyl of the adenosine moiety of NAD to yield NADP. The protein is NAD kinase of Cellvibrio japonicus (strain Ueda107) (Pseudomonas fluorescens subsp. cellulosa).